The sequence spans 424 residues: UPF0229 protein PputGB1_0427 (424 aa).

Positions 81–107 (EFTAGEHIPRPQGGGGGGGGRGKAGNS) are disordered. Positions 92-107 (QGGGGGGGGRGKAGNS) are enriched in gly residues.

This sequence belongs to the UPF0229 family.

The polypeptide is UPF0229 protein PputGB1_0427 (Pseudomonas putida (strain GB-1)).